We begin with the raw amino-acid sequence, 189 residues long: Effector protein NleF (189 aa).

Residues 186–189 (LQCG) form an interaction with host caspases region.

Monomer. Interacts (via C-terminus) with human CASP4, CASP8 and CASP9.

It localises to the secreted. The protein resides in the host cytoplasm. Effector protein that alters host cell physiology and promotes bacterial survival in host tissues. Inhibits the catalytic activity of human CASP4, CASP8 and CASP9, and thereby inhibits apoptosis of infected host cells. The sequence is that of Effector protein NleF (nleF) from Escherichia coli O157:H7.